The following is a 91-amino-acid chain: DNA-directed RNA polymerase subunit omega (91 aa).

It belongs to the RNA polymerase subunit omega family. As to quaternary structure, the RNAP catalytic core consists of 2 alpha, 1 beta, 1 beta' and 1 omega subunit. When a sigma factor is associated with the core the holoenzyme is formed, which can initiate transcription.

It catalyses the reaction RNA(n) + a ribonucleoside 5'-triphosphate = RNA(n+1) + diphosphate. Functionally, promotes RNA polymerase assembly. Latches the N- and C-terminal regions of the beta' subunit thereby facilitating its interaction with the beta and alpha subunits. This chain is DNA-directed RNA polymerase subunit omega, found in Sodalis glossinidius (strain morsitans).